We begin with the raw amino-acid sequence, 640 residues long: Replication protein A 70 kDa DNA-binding subunit A (640 aa).

The OB DNA-binding region spans 211-293; it reads AIKARVTAKG…NHLKNEWEIF (83 aa). The C4-type zinc finger occupies 503–529; the sequence is CPLMIGDKQCNKKVTRSGTNRWLCDRC.

This sequence belongs to the replication factor A protein 1 family. As to quaternary structure, heterotrimer of RPA1, RPA2 and RPA3 (canonical replication protein A complex). Interacts with RPA2A. In terms of tissue distribution, expressed in roots, leaves, stalks and flower buds.

It is found in the nucleus. Its function is as follows. Component of the replication protein A complex (RPA) required for DNA recombination, repair and replication. The activity of RPA is mediated by single-stranded DNA binding and protein interactions. Plays an essential role at later stages of meiotic recombination events required for the formation of class I crossovers. Is essential for normal progression through meiosis in pollen mother cells. Is involved in repair of double-strand DNA breaks (DSBs) induced by genotoxic stresses, but does not seem to be required for the repair of meiotic DSBs. In Arabidopsis thaliana (Mouse-ear cress), this protein is Replication protein A 70 kDa DNA-binding subunit A (RPA1A).